Reading from the N-terminus, the 166-residue chain is Large ribosomal subunit protein uL10 (166 aa).

The protein belongs to the universal ribosomal protein uL10 family. As to quaternary structure, part of the ribosomal stalk of the 50S ribosomal subunit. The N-terminus interacts with L11 and the large rRNA to form the base of the stalk. The C-terminus forms an elongated spine to which L12 dimers bind in a sequential fashion forming a multimeric L10(L12)X complex.

Its function is as follows. Forms part of the ribosomal stalk, playing a central role in the interaction of the ribosome with GTP-bound translation factors. This is Large ribosomal subunit protein uL10 from Streptococcus pneumoniae (strain 70585).